Reading from the N-terminus, the 513-residue chain is Bifunctional purine biosynthesis protein PurH (513 aa).

Residues 1-145 (MTKKAIISVY…KNFKYITVII (145 aa)) enclose the MGS-like domain.

It belongs to the PurH family.

It catalyses the reaction (6R)-10-formyltetrahydrofolate + 5-amino-1-(5-phospho-beta-D-ribosyl)imidazole-4-carboxamide = 5-formamido-1-(5-phospho-D-ribosyl)imidazole-4-carboxamide + (6S)-5,6,7,8-tetrahydrofolate. It carries out the reaction IMP + H2O = 5-formamido-1-(5-phospho-D-ribosyl)imidazole-4-carboxamide. It participates in purine metabolism; IMP biosynthesis via de novo pathway; 5-formamido-1-(5-phospho-D-ribosyl)imidazole-4-carboxamide from 5-amino-1-(5-phospho-D-ribosyl)imidazole-4-carboxamide (10-formyl THF route): step 1/1. It functions in the pathway purine metabolism; IMP biosynthesis via de novo pathway; IMP from 5-formamido-1-(5-phospho-D-ribosyl)imidazole-4-carboxamide: step 1/1. This Caldicellulosiruptor saccharolyticus (strain ATCC 43494 / DSM 8903 / Tp8T 6331) protein is Bifunctional purine biosynthesis protein PurH.